A 202-amino-acid chain; its full sequence is Transmembrane 4 L6 family member 1 (202 aa).

The Cytoplasmic portion of the chain corresponds to Met1–Tyr9. Residues Ile10 to Phe30 traverse the membrane as a helical segment. Residues Pro31–Tyr49 lie on the Extracellular side of the membrane. A helical membrane pass occupies residues Phe50–Met70. Residues Asp71–Ser93 are Cytoplasmic-facing. A helical transmembrane segment spans residues Val94 to Gly114. The Extracellular portion of the chain corresponds to Leu115–Thr161. N-linked (GlcNAc...) asparagine glycosylation is found at Asn129 and Asn142. A helical transmembrane segment spans residues Leu162–Ile182. The Cytoplasmic portion of the chain corresponds to Asn183–Cys202.

Belongs to the L6 tetraspanin family. Present in high molecular weight complexes in tumor cells. Interacts with SDCBP2. Highly expressed in skin and lung. Moderately expressed in lymph nodes and kidneys. Also present in thymic stroma and fibroblasts.

It localises to the membrane. The protein is Transmembrane 4 L6 family member 1 (Tm4sf1) of Mus musculus (Mouse).